The primary structure comprises 462 residues: Cysteine--tRNA ligase (462 aa).

C28 contributes to the Zn(2+) binding site. A 'HIGH' region motif is present at residues 30 to 40 (MTVYDYCHLGH). Residues C209, H234, and E238 each coordinate Zn(2+). The 'KMSKS' region signature appears at 266-270 (KMAKS). ATP is bound at residue K269.

Belongs to the class-I aminoacyl-tRNA synthetase family. In terms of assembly, monomer. Zn(2+) serves as cofactor.

The protein localises to the cytoplasm. It carries out the reaction tRNA(Cys) + L-cysteine + ATP = L-cysteinyl-tRNA(Cys) + AMP + diphosphate. The chain is Cysteine--tRNA ligase from Alkalilimnicola ehrlichii (strain ATCC BAA-1101 / DSM 17681 / MLHE-1).